The following is a 272-amino-acid chain: HMP-PP phosphatase (272 aa).

The active-site Nucleophile is Asp8. Residues Asp8, Asp10, and Asp212 each coordinate Mg(2+).

The protein belongs to the HAD-like hydrolase superfamily. Cof family. Mg(2+) is required as a cofactor.

It carries out the reaction 4-amino-2-methyl-5-(diphosphooxymethyl)pyrimidine + H2O = 4-amino-2-methyl-5-(phosphooxymethyl)pyrimidine + phosphate + H(+). Catalyzes the hydrolysis of 4-amino-2-methyl-5-hydroxymethylpyrimidine pyrophosphate (HMP-PP) to 4-amino-2-methyl-5-hydroxymethylpyrimidine phosphate (HMP-P). This Enterobacter sp. (strain 638) protein is HMP-PP phosphatase.